The following is a 346-amino-acid chain: tRNA(Ile)-lysidine synthase (346 aa).

Residue 32 to 37 (SGGPDS) participates in ATP binding.

It belongs to the tRNA(Ile)-lysidine synthase family.

The protein resides in the cytoplasm. It carries out the reaction cytidine(34) in tRNA(Ile2) + L-lysine + ATP = lysidine(34) in tRNA(Ile2) + AMP + diphosphate + H(+). Functionally, ligates lysine onto the cytidine present at position 34 of the AUA codon-specific tRNA(Ile) that contains the anticodon CAU, in an ATP-dependent manner. Cytidine is converted to lysidine, thus changing the amino acid specificity of the tRNA from methionine to isoleucine. The chain is tRNA(Ile)-lysidine synthase from Rhodopseudomonas palustris (strain ATCC BAA-98 / CGA009).